Reading from the N-terminus, the 164-residue chain is Ribosome-binding factor A (164 aa).

The protein belongs to the RbfA family. Monomer. Binds 30S ribosomal subunits, but not 50S ribosomal subunits or 70S ribosomes.

It is found in the cytoplasm. Functionally, one of several proteins that assist in the late maturation steps of the functional core of the 30S ribosomal subunit. Associates with free 30S ribosomal subunits (but not with 30S subunits that are part of 70S ribosomes or polysomes). Required for efficient processing of 16S rRNA. May interact with the 5'-terminal helix region of 16S rRNA. In Caulobacter sp. (strain K31), this protein is Ribosome-binding factor A.